The following is a 505-amino-acid chain: Lysine--tRNA ligase (505 aa).

Mg(2+)-binding residues include glutamate 415 and glutamate 422.

Belongs to the class-II aminoacyl-tRNA synthetase family. Homodimer. Mg(2+) is required as a cofactor.

It localises to the cytoplasm. The catalysed reaction is tRNA(Lys) + L-lysine + ATP = L-lysyl-tRNA(Lys) + AMP + diphosphate. The protein is Lysine--tRNA ligase of Vibrio parahaemolyticus serotype O3:K6 (strain RIMD 2210633).